The sequence spans 114 residues: rRNA-processing protein cgrA (114 aa).

The span at Met-1–Ala-13 shows a compositional bias: low complexity. 2 disordered regions span residues Met-1–Lys-47 and Arg-77–Ser-114. Residues Thr-40–Arg-101 adopt a coiled-coil conformation. The span at Arg-77 to Lys-93 shows a compositional bias: basic and acidic residues. The segment covering Met-94–Ser-114 has biased composition (basic residues).

Belongs to the CGR1 family.

The protein localises to the nucleus. It is found in the nucleolus. Functionally, involved in nucleolar integrity and required for processing of the pre-rRNA for the 60S ribosome subunit. The sequence is that of rRNA-processing protein cgrA (cgrA) from Emericella nidulans (strain FGSC A4 / ATCC 38163 / CBS 112.46 / NRRL 194 / M139) (Aspergillus nidulans).